The primary structure comprises 319 residues: Selection and upkeep of intraepithelial T-cells protein 9 (319 aa).

The first 26 residues, Met-1–Ala-26, serve as a signal peptide directing secretion. One can recognise an Ig-like V-type domain in the interval Met-27–Val-117. Residues Met-27 to Ser-139 are Extracellular-facing. Cys-47 and Cys-101 are joined by a disulfide. Asn-105 is a glycosylation site (N-linked (GlcNAc...) asparagine). The chain crosses the membrane as a helical span at residues Ile-140–Leu-160. Over Arg-161–Gly-183 the chain is Cytoplasmic. Residues Val-184–Ile-204 form a helical membrane-spanning segment. Residues Tyr-205 to Asn-228 are Extracellular-facing. The helical transmembrane segment at Ile-229–Trp-249 threads the bilayer. The Cytoplasmic portion of the chain corresponds to Thr-250–Ser-319.

Belongs to the SKINT family. As to expression, expressed in skin, thymus and testis.

It localises to the membrane. Its function is as follows. May act by engaging a cell surface molecule on immature T-cells in the embryonic thymus. This is Selection and upkeep of intraepithelial T-cells protein 9 (Skint9) from Mus musculus (Mouse).